A 260-amino-acid polypeptide reads, in one-letter code: Pyridoxine 5'-phosphate synthase (260 aa).

Positions 10 and 21 each coordinate 3-amino-2-oxopropyl phosphate. His46 (proton acceptor) is an active-site residue. 2 residues coordinate 1-deoxy-D-xylulose 5-phosphate: Arg48 and His53. Glu76 serves as the catalytic Proton acceptor. Residue Thr113 participates in 1-deoxy-D-xylulose 5-phosphate binding. Residue His204 is the Proton donor of the active site. 3-amino-2-oxopropyl phosphate contacts are provided by residues Asp205 and 227–228 (GH).

This sequence belongs to the PNP synthase family. As to quaternary structure, homooctamer; tetramer of dimers.

The protein resides in the cytoplasm. The catalysed reaction is 3-amino-2-oxopropyl phosphate + 1-deoxy-D-xylulose 5-phosphate = pyridoxine 5'-phosphate + phosphate + 2 H2O + H(+). The protein operates within cofactor biosynthesis; pyridoxine 5'-phosphate biosynthesis; pyridoxine 5'-phosphate from D-erythrose 4-phosphate: step 5/5. Functionally, catalyzes the complicated ring closure reaction between the two acyclic compounds 1-deoxy-D-xylulose-5-phosphate (DXP) and 3-amino-2-oxopropyl phosphate (1-amino-acetone-3-phosphate or AAP) to form pyridoxine 5'-phosphate (PNP) and inorganic phosphate. The sequence is that of Pyridoxine 5'-phosphate synthase from Xylella fastidiosa (strain 9a5c).